Consider the following 68-residue polypeptide: MRFFFLLLTVALFLTSITGDDAERMLGMKEGGYVREDCGSDCAPCGGECCCEPNSCIDGTCHHESSPN.

Residues 1–29 (MRFFFLLLTVALFLTSITGDDAERMLGMK) form the signal peptide. Residues 30–35 (EGGYVR) constitute a propeptide that is removed on maturation. 4 disulfide bridges follow: cysteine 38/cysteine 49, cysteine 42/cysteine 51, cysteine 45/cysteine 56, and cysteine 50/cysteine 61. Proline 44 carries the 4-hydroxyproline modification.

It belongs to the conotoxin G2 superfamily. 1 family. Expressed by the venom duct.

It is found in the secreted. This peptide promotes cell proliferation (EC(50)=17.85 uM) and inhibits apoptosis (EC(50)=2.2 uM). The protein is Conotoxin phi-MiXXVIIB of Conus miles (Soldier cone).